Reading from the N-terminus, the 562-residue chain is Arginine--tRNA ligase (562 aa).

The 'HIGH' region signature appears at 122–132 (PNIAKDMHVGH).

It belongs to the class-I aminoacyl-tRNA synthetase family. Monomer.

It localises to the cytoplasm. It catalyses the reaction tRNA(Arg) + L-arginine + ATP = L-arginyl-tRNA(Arg) + AMP + diphosphate. This is Arginine--tRNA ligase from Chlamydia abortus (strain DSM 27085 / S26/3) (Chlamydophila abortus).